The primary structure comprises 519 residues: MSDLFEDPAPSRNTPEFTVSELSGAVKRVIEGEFGLVRVRGEIGRVSRPASGHLYFDLKDDRAVMAAICWKGQAGRLSVRPEEGMEVVATGRMTTFPGQSKYQIIVEDMAPAGAGALMAMLEKRRAALAAEGLFDAGRKRPLPFLPRVIGVVTSPSGAVIRDILHRLRDRFPSHVLIWPVAVQGEKCAPEVAAAIRGFNTLPEGGPIPRPDLLIVARGGGSLEDLWGFNEEIVVRAAAESRIPLISAVGHETDTTLIDHAADRRAPTPTAAAEMAVPVRLELLAGLDGQGARLSRCAAETIRRRDQRLRDLARALPRLESLVAGPSQRFDLWSGRLSGALGQSVAARRARLEPLGAHLRPRLLADLVARQKDRLGDRTRSLETCLGRRAERARDRFDALSARLAPAFARLIAETERASRRDAATLGTLAARLDAAPEARLARLSDRLEALDRLRQTLGYRETLKRGYAVVRADGAVLTTKAEAGAAAMLEIEFQDGRLSVGRGKTRKPKEEPPAQGSLL.

A disordered region spans residues 500 to 519 (VGRGKTRKPKEEPPAQGSLL).

Belongs to the XseA family. In terms of assembly, heterooligomer composed of large and small subunits.

Its subcellular location is the cytoplasm. The enzyme catalyses Exonucleolytic cleavage in either 5'- to 3'- or 3'- to 5'-direction to yield nucleoside 5'-phosphates.. Its function is as follows. Bidirectionally degrades single-stranded DNA into large acid-insoluble oligonucleotides, which are then degraded further into small acid-soluble oligonucleotides. In Cereibacter sphaeroides (strain ATCC 17029 / ATH 2.4.9) (Rhodobacter sphaeroides), this protein is Exodeoxyribonuclease 7 large subunit.